Consider the following 397-residue polypeptide: Phosphoglycerate kinase (397 aa).

Substrate-binding positions include 21–23 (DFN), R37, 60–63 (HLGR), R119, and R152. ATP contacts are provided by residues K203, G294, E325, and 354-357 (GGDS).

The protein belongs to the phosphoglycerate kinase family. In terms of assembly, monomer.

It localises to the cytoplasm. The enzyme catalyses (2R)-3-phosphoglycerate + ATP = (2R)-3-phospho-glyceroyl phosphate + ADP. Its pathway is carbohydrate degradation; glycolysis; pyruvate from D-glyceraldehyde 3-phosphate: step 2/5. The polypeptide is Phosphoglycerate kinase (Pelodictyon phaeoclathratiforme (strain DSM 5477 / BU-1)).